A 266-amino-acid chain; its full sequence is GTP cyclohydrolase III (266 aa).

This sequence belongs to the archaeal-type GTP cyclohydrolase family.

The enzyme catalyses GTP + 3 H2O = 2-amino-5-formylamino-6-(5-phospho-D-ribosylamino)pyrimidin-4(3H)-one + 2 phosphate + 2 H(+). In terms of biological role, catalyzes the formation of 2-amino-5-formylamino-6-ribofuranosylamino-4(3H)-pyrimidinone ribonucleotide monophosphate and inorganic phosphate from GTP. Also has an independent pyrophosphate phosphohydrolase activity. In Methanococcus maripaludis (strain C7 / ATCC BAA-1331), this protein is GTP cyclohydrolase III.